Consider the following 657-residue polypeptide: MGKDSKKHKKERRRERSPSTSDSDEERLQKRLAEQRSLKKDEKRRQKEEMKKNESAEEKRARRMEKKMRKDAKRKDADAEDTLIPPELNYTNLNNPFNDTKLTQTFVWGKKLEREGKSGLTQDEITKQTSQRIRKNLHEAAEFKRIRDSRAAAKEDMEMMKRDADLRAGQISDTKEREFQMDQIKERTRIRIDQGRAKAIDLLSRYARFADENPHTAKIPDFELENPMEYLKASCKSVDDYEDLIEDIKTYREVDGWAKNETWWMDVTRIAEDEIQKKAAQNRGDVHASVQTEVQNMFKNKSIDELLKLEDQMDAKIRGNSGNKGYWQDLDDQLKVFIARKRLREHHGRVLRLQLAIIKEEQKKEIQQQESEELLPVAEVPPQVKIQKEEEEEEEEDEDDEKISKKVRRKIDVQTLDDPELDEPERERKWRALTGDQLDDVTRELYRIGCYSPTYISADDTMPGIEILDEQADVDNLTERRNRNRGTLPSSSAASSGAPQGASSKMMAIAREGMEADESIFGAEEQLAAQRHLWSDKYRPRKPTYLNRVQTGFDWNKYNQTHYDQDNPPPKIVQGYKFNIFYPDLLDMTVAPRFGLTSCEDPDFAIIRFKAGPPYEDIAFKVVNREWETLHKNGYKCQFQNGVFQLWFMFKKYRYRR.

Residues 1–15 (MGKDSKKHKKERRRE) are compositionally biased toward basic residues. 3 disordered regions span residues 1-83 (MGKD…EDTL), 369-406 (QESE…ISKK), and 472-503 (ADVD…QGAS). Coiled-coil stretches lie at residues 23–77 (SDEE…RKDA) and 352–403 (RLQL…DEKI). Residues 26-60 (ERLQKRLAEQRSLKKDEKRRQKEEMKKNESAEEKR) are compositionally biased toward basic and acidic residues. The span at 61 to 72 (ARRMEKKMRKDA) shows a compositional bias: basic residues. Positions 389–401 (EEEEEEEEDEDDE) are enriched in acidic residues. The segment covering 489-503 (PSSSAASSGAPQGAS) has biased composition (low complexity).

Belongs to the CACTIN family. As to expression, expressed in pharynx, intestine, vulva and spermatheca (at protein level).

It localises to the nucleus. It is found in the cytoplasm. Its function is as follows. Plays a role in pre-mRNA splicing by facilitating excision of a subset of introns. Plays a role during early embryonic development. Required for the distal tip cell migration at the end of larval development and for gonad morphogenesis. The polypeptide is Splicing factor Cactin (cacn-1) (Caenorhabditis elegans).